The following is a 589-amino-acid chain: Phosphoenolpyruvate carboxykinase [GTP] (589 aa).

Residues Arg-75 and 207–209 (YGG) contribute to the substrate site. Lys-216 and His-236 together coordinate Mn(2+). A substrate-binding site is contributed by Ser-258. A GTP-binding site is contributed by 259-264 (ASGKTN). The active site involves Ser-260. A Mn(2+)-binding site is contributed by Asp-287. 374 to 376 (NSR) is a binding site for substrate. Residues Arg-376, Arg-407, and 500 to 503 (FAEN) each bind GTP.

Belongs to the phosphoenolpyruvate carboxykinase [GTP] family. Requires Mn(2+) as cofactor.

It is found in the cytoplasm. The catalysed reaction is oxaloacetate + GTP = phosphoenolpyruvate + GDP + CO2. The protein operates within carbohydrate biosynthesis; gluconeogenesis. Its function is as follows. Catalyzes the conversion of oxaloacetate (OAA) to phosphoenolpyruvate (PEP), the rate-limiting step in the metabolic pathway that produces glucose from lactate and other precursors derived from the citric acid cycle. The polypeptide is Phosphoenolpyruvate carboxykinase [GTP] (Thermoplasma volcanium (strain ATCC 51530 / DSM 4299 / JCM 9571 / NBRC 15438 / GSS1)).